The sequence spans 379 residues: Stimulator of interferon genes protein (379 aa).

Over methionine 1–arginine 17 the chain is Cytoplasmic. Residues methionine 1 to leucine 190 are mediates interaction with ZDHHC1 and ZDHHC11. The chain crosses the membrane as a helical span at residues phenylalanine 18–tryptophan 34. The Lumenal portion of the chain corresponds to methionine 35–leucine 44. The chain crosses the membrane as a helical span at residues histidine 45–glutamate 69. Residues leucine 70–serine 91 lie on the Cytoplasmic side of the membrane. A lipid anchor (S-palmitoyl cysteine) is attached at cysteine 88. A helical transmembrane segment spans residues proline 92–tyrosine 106. Residues cysteine 107–arginine 116 are Lumenal-facing. Residues leucine 117 to leucine 134 traverse the membrane as a helical segment. Over aspartate 135–isoleucine 379 the chain is Cytoplasmic. Lysine 151 is covalently cross-linked (Glycyl lysine isopeptide (Lys-Gly) (interchain with G-Cter in ubiquitin)). The cyclic dinucleotide-binding domain (CBD) stretch occupies residues phenylalanine 153–glutamate 340. Serine 162 to tyrosine 167 serves as a coordination point for 2',3'-cGAMP. Glycine 166 is a binding site for 3',3'-c-di-GMP. Position 167 (tyrosine 167) interacts with 2',3'-cUAMP. Residue lysine 236 forms a Glycyl lysine isopeptide (Lys-Gly) (interchain with G-Cter in ubiquitin) linkage. Residue arginine 238 coordinates 2',3'-cUAMP. 2',3'-cGAMP contacts are provided by residues arginine 238–serine 241 and threonine 263. 3',3'-c-di-GMP-binding positions include arginine 238–serine 241 and threonine 263. Serine 241 carries the phosphoserine modification. Threonine 263 lines the 2',3'-cUAMP pocket. Lysine 338 is covalently cross-linked (Glycyl lysine isopeptide (Lys-Gly) (interchain with G-Cter in SUMO)). The C-terminal tail (CTT) stretch occupies residues glutamate 340–isoleucine 379. Serine 355 is modified (phosphoserine). 2 positions are modified to phosphoserine; by TBK1: serine 358 and serine 366. Positions leucine 363 to serine 366 match the pLxIS motif motif.

This sequence belongs to the STING family. In terms of assembly, homodimer; forms a homodimer in absence of cyclic nucleotide (c-di-GMP or cGAMP); 'Lys-63'-linked ubiquitination at Lys-151 is required for homodimerization. Homotetramer; in presence of cyclic nucleotide (c-di-GMP or cGAMP), forms tetramers and higher-order oligomers through side-by-side packing. Interacts (when phosphorylated) with IRF3; following activation and phosphorylation on the pLxIS motif by TBK1, recruits IRF3. Interacts with RIGI, MAVS and SSR2. Interacts with RNF5 and TRIM56. Interacts with TBK1; when homodimer, leading to subsequent production of IFN-beta. Interacts with IFIT1 and IFIT2. Interacts with TRIM29; this interaction induces STING1 ubiquitination and subsequent degradation. Associates with the MHC-II complex. Interacts with STEEP1; interaction takes place upon cGAMP-activation and STING1 phosphorylation by MAP3K7/TAK1 and promotes STING1 translocation to COPII vesicles. Interacts with SEC24A, SEC24B and SEC24C; promoting translocation to COPII vesicles. Interacts (when ubiquitinated) with SQSTM1; leading to relocalization to autophagosomes. Interacts with SURF4. Interacts with HNRNPA2B1. Interacts with ZDHHC1; ZDHHC1 constitutively interacts with STING1 and in presence of DNA viruses activates it by promoting its cGAMP-induced oligomerization and the recruitment of downstream signaling components. Interacts with ZDHHC11; in presence of DNA viruses promotes the recruitment of IRF3 to STING1. Interacts with TOMM70. Interacts with TAB1; promoting recruitment of TAB1 to the endoplasmic reticulum membrane and subsequent activation of MAP3K7/TAK1. Interacts (via transmembrane domain) with TMEM203. Interacts with DDX41. In terms of processing, phosphorylation by TBK1 leads to activation and production of IFN-beta. Following cyclic nucleotide (c-di-GMP or cGAMP)-binding, activation and translocation from the endoplasmic reticulum, STING1 is phosphorylated by TBK1 at Ser-366 in the pLxIS motif. The phosphorylated pLxIS motif constitutes an IRF3-binding motif, leading to recruitment of the transcription factor IRF3 to induce type-I interferons and other cytokines. Phosphorylated on tyrosine residues upon MHC-II aggregation. Dephosphorylation by PPP6C leads to inactivation and decreased production of IFN-beta. Phosphorylation at Ser-358 is also required to activate IRF3. Phosphorylation at Ser-355 by MAP3K7/TAK1 facilitates its interaction with STEEP1, promoting STING1 translocation to COPII vesicles. Post-translationally, ubiquitinated. Ubiquitinated via 'Lys-63'-linked ubiquitin chains in response to double-stranded DNA treatment, leading to relocalization to autophagosomes and subsequent degradation; this process is dependent on SQSTM1. 'Lys-63'-linked ubiquitination mediated by TRIM56 at Lys-151 promotes homodimerization and recruitment of the antiviral kinase TBK1 and subsequent production of IFN-beta. 'Lys-48'-linked polyubiquitination at Lys-151 occurring after viral infection is mediated by RNF5 and leads to proteasomal degradation. 'Lys-11'-linked polyubiquitination at Lys-151 by RNF26 leads to stabilize STING1: it protects STING1 from RNF5-mediated 'Lys-48'-linked polyubiquitination. 'Lys-33'-linked and 'Lys-48'-linked deubiquitinated by USP20; leading to its stabilization and promotion of innate antiviral response. 'Lys-48'-linked deubiquitinated by USP44; leading to its stabilization and promotion of innate antiviral response. Deubiquitinated by USP13; leading to inhibition of innate antiviral response. 'Lys-63'-linked deubiquitinated by USP49; leading to inhibition of the subsequent recruitment of TBK1 to the signaling complex. 'Lys-63'-linked ubiquitination mediated by RNF39 promotes the activation of the cGAS-STING pathway. Sumoylated at Lys-338 by TRIM38 during the early phase of viral infection, promoting its stability by preventing its relocalization to autophagosomes and subsequent degradation. Desumoylated by SENP2 during the late phase of viral infection. In terms of processing, palmitoylation takes place in the Golgi apparatus and creates a platform for the recruitment of TBK1.

Its subcellular location is the endoplasmic reticulum membrane. The protein localises to the cytoplasm. The protein resides in the perinuclear region. It localises to the endoplasmic reticulum-Golgi intermediate compartment membrane. It is found in the golgi apparatus membrane. Its subcellular location is the cytoplasmic vesicle. The protein localises to the autophagosome membrane. The protein resides in the mitochondrion outer membrane. It localises to the cell membrane. The enzyme catalyses H(+)(in) = H(+)(out). In contrast to mouse protein, not activated by anticancer molecule 5,6-dimethylxanthenone 4-acetic acid (DMXAA). Facilitator of innate immune signaling that acts as a sensor of cytosolic DNA from bacteria and viruses and promotes the production of type I interferon (IFN-alpha and IFN-beta). Innate immune response is triggered in response to non-CpG double-stranded DNA from viruses and bacteria delivered to the cytoplasm. Acts by binding cyclic dinucleotides: recognizes and binds cyclic di-GMP (c-di-GMP), a second messenger produced by bacteria, cyclic UMP-AMP (2',3'-cUAMP), and cyclic GMP-AMP (cGAMP), a messenger produced by CGAS in response to DNA virus in the cytosol. Upon binding to c-di-GMP, cUAMP or cGAMP, STING1 oligomerizes, translocates from the endoplasmic reticulum and is phosphorylated by TBK1 on the pLxIS motif, leading to recruitment and subsequent activation of the transcription factor IRF3 to induce expression of type I interferon and exert a potent anti-viral state. Exhibits 2',3' phosphodiester linkage-specific ligand recognition: can bind both 2'-3' linked cGAMP (2'-3'-cGAMP) and 3'-3' linked cGAMP but is preferentially activated by 2'-3' linked cGAMP. The preference for 2'-3'-cGAMP, compared to other linkage isomers is probably due to the ligand itself, whichs adopts an organized free-ligand conformation that resembles the STING1-bound conformation and pays low energy costs in changing into the active conformation. In addition to promote the production of type I interferons, plays a direct role in autophagy. Following cGAMP-binding, STING1 buds from the endoplasmic reticulum into COPII vesicles, which then form the endoplasmic reticulum-Golgi intermediate compartment (ERGIC). The ERGIC serves as the membrane source for WIPI2 recruitment and LC3 lipidation, leading to formation of autophagosomes that target cytosolic DNA or DNA viruses for degradation by the lysosome. Promotes autophagy by acting as a proton channel that directs proton efflux from the Golgi to facilitate MAP1LC3B/LC3B lipidation. The autophagy- and interferon-inducing activities can be uncoupled and autophagy induction is independent of TBK1 phosphorylation. Autophagy is also triggered upon infection by bacteria: following c-di-GMP-binding, which is produced by live Gram-positive bacteria, promotes reticulophagy. May be involved in translocon function, the translocon possibly being able to influence the induction of type I interferons. May be involved in transduction of apoptotic signals via its association with the major histocompatibility complex class II (MHC-II). The polypeptide is Stimulator of interferon genes protein (Rattus norvegicus (Rat)).